A 147-amino-acid polypeptide reads, in one-letter code: uncharacterized protein (147 aa).

The 89-residue stretch at Ile50–Ile138 folds into the ABM domain.

This sequence belongs to the LsrG family.

This is an uncharacterized protein from Synechocystis sp. (strain ATCC 27184 / PCC 6803 / Kazusa).